The following is a 101-amino-acid chain: Small ribosomal subunit protein uS14 (101 aa).

This sequence belongs to the universal ribosomal protein uS14 family. In terms of assembly, part of the 30S ribosomal subunit. Contacts proteins S3 and S10.

Functionally, binds 16S rRNA, required for the assembly of 30S particles and may also be responsible for determining the conformation of the 16S rRNA at the A site. The polypeptide is Small ribosomal subunit protein uS14 (Anaplasma phagocytophilum (strain HZ)).